We begin with the raw amino-acid sequence, 541 residues long: Chaperonin GroEL 2 (541 aa).

Residues 30 to 33 (TLGP), lysine 51, 87 to 91 (DGTTT), glycine 415, and aspartate 496 contribute to the ATP site.

It belongs to the chaperonin (HSP60) family. As to quaternary structure, forms a cylinder of 14 subunits composed of two heptameric rings stacked back-to-back. Interacts with the co-chaperonin GroES.

The protein resides in the cytoplasm. The catalysed reaction is ATP + H2O + a folded polypeptide = ADP + phosphate + an unfolded polypeptide.. In terms of biological role, together with its co-chaperonin GroES, plays an essential role in assisting protein folding. The GroEL-GroES system forms a nano-cage that allows encapsulation of the non-native substrate proteins and provides a physical environment optimized to promote and accelerate protein folding. This is Chaperonin GroEL 2 from Gluconacetobacter diazotrophicus (strain ATCC 49037 / DSM 5601 / CCUG 37298 / CIP 103539 / LMG 7603 / PAl5).